The chain runs to 92 residues: Small ribosomal subunit protein uS17 (92 aa).

Belongs to the universal ribosomal protein uS17 family. In terms of assembly, part of the 30S ribosomal subunit.

In terms of biological role, one of the primary rRNA binding proteins, it binds specifically to the 5'-end of 16S ribosomal RNA. In Wigglesworthia glossinidia brevipalpis, this protein is Small ribosomal subunit protein uS17.